Reading from the N-terminus, the 435-residue chain is Probable E3 ubiquitin-protein ligase makorin-1 (435 aa).

2 C3H1-type zinc fingers span residues 18 to 45 (WTKH…HDLT) and 48 to 75 (KPAA…HCKP). The interval 81–109 (LPAPQMLPLPSASLAGPSDPEPSGPTPVP) is disordered. Over residues 99–108 (DPEPSGPTPV) the composition is skewed to pro residues. A C3H1-type 3 zinc finger spans residues 155–182 (QLRKQLCPYAAVGECRYGINCAYLHGDV). The interval 183-210 (CYMCGLQVLHPTDNNQRSEHTKACIEAH) is makorin-type Cys-His. Residues 228-282 (CGVCMEVVFEKANPSERRFGILSNCSHCYCLKCIRKWRSAKQFESKIIKSCPECR) form an RING-type zinc finger. Residues 311–340 (GMGSKPCRYFDEGRGTCPFGSNCFYKHAFP) form a C3H1-type 4 zinc finger. Residues 345–369 (EEAQPQRRQTGSNSRNRNSRRTPLW) form a disordered region.

Weakly expressed in adult brain, heart and kidney.

It catalyses the reaction S-ubiquitinyl-[E2 ubiquitin-conjugating enzyme]-L-cysteine + [acceptor protein]-L-lysine = [E2 ubiquitin-conjugating enzyme]-L-cysteine + N(6)-ubiquitinyl-[acceptor protein]-L-lysine.. It functions in the pathway protein modification; protein ubiquitination. Functionally, E3 ubiquitin ligase catalyzing the covalent attachment of ubiquitin moieties onto substrate proteins. This Seriola quinqueradiata (Five-ray yellowtail) protein is Probable E3 ubiquitin-protein ligase makorin-1.